Here is a 411-residue protein sequence, read N- to C-terminus: Multidrug resistance protein MdtG (411 aa).

11 helical membrane passes run 17–37 (LFVAWCGCFLTGIAFSLVMPF), 59–79 (LVFSITFLFSAIASPFWGGLA), 92–112 (ALGMSVVMVLMGLATSIWQFL), 116–136 (AVLGLLGGFVPNANALIATQV), 147–167 (WLSTGAVSGALIGPLIGGLLA), 174–194 (PVFFITASVLFVCFIMTLFAV), 222–242 (VLTLFVTTMIIQVATGSIAPI), 257–277 (LAFVSGLIASVPGVAALISAP), 291–311 (ILVAMLLVSVLLLIPMSMVQN), 320–340 (FLLGAADGALLPAVQTLLIYN), and 379–399 (AVFVVTACVVLFNAIYSWITL).

This sequence belongs to the major facilitator superfamily. DHA1 family. MdtG (TC 2.A.1.2.20) subfamily.

The protein resides in the cell inner membrane. This chain is Multidrug resistance protein MdtG, found in Erwinia billingiae (strain Eb661).